The sequence spans 660 residues: Iron(3+)-hydroxamate import system permease protein FhuB (660 aa).

18 consecutive transmembrane segments (helical) span residues 5–25 (IALFPALLLALLVIVATALTW), 62–82 (LAISLLVGAGLGLVGVLFQQV), 93–113 (LGVATGAQLGITVTTLWAIPG), 118–138 (QFAAQAGACVVGLIVFGVAWG), 147–167 (ILAGLVVSLYCGAINQLLVIF), 197–217 (QLLGGVMLTLLLLRPLTLMGL), 240–260 (AIVISALLVNAVGIIGFIGLF), 277–297 (LMLASLIGALILWLSDQIILW), 303–323 (MEVSTGSVTALIGAPLLLWLL), 348–368 (LAFALAGGVLLLMAVVVALSF), 391–411 (WPRIMAALFAGVMLAVAGCII), 424–444 (VLGISSGAAFGVVLMLFLVPG), 447–467 (FGWLLPAGSLGAAVTLLIIMI), 479–499 (MLLAGMALSTAFTMLLMMLQA), 528–548 (GIVMVILLAITPLCRRWLTIL), 567–587 (IALLLLAACLTATATMTIGPL), 607–627 (MPHIVISALVGGLLLVFADWC), and 635–655 (FQIPAGLLSTFIGAPYFIYLL).

This sequence belongs to the binding-protein-dependent transport system permease family. FecCD subfamily. In terms of assembly, the complex is composed of two ATP-binding proteins (FhuC), a transmembrane protein (FhuB) and a solute-binding protein (FhuD). FhuB interacts with FhuC. FhuB interacts with FhuD. FhuB binds substrate-loaded FhuD more strongly than FhuD alone.

The protein resides in the cell inner membrane. Functionally, part of the ABC transporter complex FhuCDB involved in iron(3+)-hydroxamate import. Responsible for the translocation of the substrate across the membrane. The protein is Iron(3+)-hydroxamate import system permease protein FhuB (fhuB) of Escherichia coli (strain K12).